The following is a 194-amino-acid chain: Phosphoheptose isomerase (194 aa).

The region spanning Ile-37 to Ala-194 is the SIS domain. Residue Asn-52–Gly-54 participates in substrate binding. Zn(2+)-binding residues include His-61 and Glu-65. Substrate contacts are provided by residues Glu-65, Asn-93–Asp-94, Ser-119–Ser-121, Ser-124, and Gln-172. Zn(2+) contacts are provided by Gln-172 and His-180.

This sequence belongs to the SIS family. GmhA subfamily. In terms of assembly, homotetramer. The cofactor is Zn(2+).

Its subcellular location is the cytoplasm. The enzyme catalyses 2 D-sedoheptulose 7-phosphate = D-glycero-alpha-D-manno-heptose 7-phosphate + D-glycero-beta-D-manno-heptose 7-phosphate. It participates in carbohydrate biosynthesis; D-glycero-D-manno-heptose 7-phosphate biosynthesis; D-glycero-alpha-D-manno-heptose 7-phosphate and D-glycero-beta-D-manno-heptose 7-phosphate from sedoheptulose 7-phosphate: step 1/1. Catalyzes the isomerization of sedoheptulose 7-phosphate in D-glycero-D-manno-heptose 7-phosphate. The chain is Phosphoheptose isomerase from Haemophilus influenzae (strain PittEE).